The sequence spans 100 residues: uncharacterized protein (100 aa).

Positions 1–18 (MWGFLVLKARWLVTPVRT) are cleaved as a signal peptide. Residues 48–86 (LTRGVIRVSPQERSQQNQSAPKGPTPSTRPKPRTLGPQA) are disordered. Residues 58 to 69 (QERSQQNQSAPK) show a composition bias toward polar residues. Asn64 carries an N-linked (GlcNAc...) asparagine glycan.

It is found in the secreted. This is an uncharacterized protein from Homo sapiens (Human).